We begin with the raw amino-acid sequence, 380 residues long: MAPNIRKSHPLLKMVNNSLIDLPAPSNISAWWNFGSLLGVCLLTQILTGLLLAMHYTADTTLAFSSVAHTCRNVQYGWLIRNLHANGASFFFICIYLHIGRGFYYGSYLYKETWNTGVILLLTLMATAFVGYVLPWGQMSFWGATVITNLFSAIPYIGQTLVEWAWGGFSVDNPTLTRFFALHFLLPFMIAGLTLIHLTFLHESGSNNPLGIVSNCDKIPFHPYFTLKDILGFMLMFLPLTTLALFSPNLLGDPENFTPANPLVTPPHIKPEWYFLFAYAILRSIPNKLGGVLALAASVLVLFLAPFLHKAKQRAMTFRPLSQLLFWILVANLFILTWVGSQPVEHPFIIIGQLASLTYFTILLILFPITGALENKMLNY.

The next 4 helical transmembrane spans lie at 34–54, 78–99, 114–134, and 179–199; these read FGSL…LLAM, WLIR…YLHI, WNTG…GYVL, and FFAL…IHLT. Heme b contacts are provided by H84 and H98. Positions 183 and 197 each coordinate heme b. An a ubiquinone-binding site is contributed by H202. The next 4 helical transmembrane spans lie at 227 to 247, 289 to 309, 321 to 341, and 348 to 368; these read LKDI…ALFS, LGGV…PFLH, LSQL…WVGS, and FIII…ILFP.

This sequence belongs to the cytochrome b family. As to quaternary structure, the cytochrome bc1 complex contains 11 subunits: 3 respiratory subunits (MT-CYB, CYC1 and UQCRFS1), 2 core proteins (UQCRC1 and UQCRC2) and 6 low-molecular weight proteins (UQCRH/QCR6, UQCRB/QCR7, UQCRQ/QCR8, UQCR10/QCR9, UQCR11/QCR10 and a cleavage product of UQCRFS1). This cytochrome bc1 complex then forms a dimer. Heme b serves as cofactor.

It localises to the mitochondrion inner membrane. Its function is as follows. Component of the ubiquinol-cytochrome c reductase complex (complex III or cytochrome b-c1 complex) that is part of the mitochondrial respiratory chain. The b-c1 complex mediates electron transfer from ubiquinol to cytochrome c. Contributes to the generation of a proton gradient across the mitochondrial membrane that is then used for ATP synthesis. The polypeptide is Cytochrome b (MT-CYB) (Calonectris leucomelas (Streaked shearwater)).